The primary structure comprises 145 residues: Large ribosomal subunit protein uL11 (145 aa).

This sequence belongs to the universal ribosomal protein uL11 family. As to quaternary structure, part of the ribosomal stalk of the 50S ribosomal subunit. Interacts with L10 and the large rRNA to form the base of the stalk. L10 forms an elongated spine to which L12 dimers bind in a sequential fashion forming a multimeric L10(L12)X complex. One or more lysine residues are methylated.

Forms part of the ribosomal stalk which helps the ribosome interact with GTP-bound translation factors. The sequence is that of Large ribosomal subunit protein uL11 from Aquifex aeolicus (strain VF5).